Reading from the N-terminus, the 307-residue chain is Mitochondrial brown fat uncoupling protein 1 (307 aa).

At 1–10 (MVSQTTSEVQ) the chain is on the mitochondrial intermembrane side. The helical transmembrane segment at 11-32 (PTMGVKIFSAGVAACLADIITF) threads the bilayer. Solcar repeat units follow at residues 11-102 (PTMG…VQEY), 111-201 (PTLV…MKGA), and 210-295 (DDVP…LKKE). At 33–73 (PLDTAKVRLQIQGEGQTSSTIRYKGVLGTITTLAKTEGLPK) the chain is on the mitochondrial matrix side. Fatty acid 16:0 is bound at residue K56. The chain crosses the membrane as a helical span at residues 74–96 (LYSGLPAGIQRQISFASLRIGLY). Over 97 to 116 (DTVQEYFSSGKETPPTLVNR) the chain is Mitochondrial intermembrane. A helical membrane pass occupies residues 117 to 133 (ISAGLMTGGVAVFIGQP). At 134-178 (TEVVKVRLQAQSHLHGIKPRYTGTYNAYRIIATTESLSTLWKGTT) the chain is on the mitochondrial matrix side. Residues 179–195 (PNLLRNVIINCTELVTY) form a helical membrane-spanning segment. Over 196–212 (DLMKGALVNNQILADDV) the chain is Mitochondrial intermembrane. A helical membrane pass occupies residues 213–232 (PCHLLSALVAGFCTTFLASP). The Mitochondrial matrix portion of the chain corresponds to 233–266 (ADVVKTRFINSLPGQYPSVPSCAMTMFTKEGPTA). A Cysteine sulfenic acid (-SOH) modification is found at C254. A helical transmembrane segment spans residues 267 to 289 (FFKGFVPSFLRLASWNVIMFVCF). K269 contacts fatty acid 16:0. At 290-307 (EQLKKELMKSRQTVDCTT) the chain is on the mitochondrial intermembrane side.

Belongs to the mitochondrial carrier (TC 2.A.29) family. Most probably functions as a monomer. Binds one purine nucleotide per monomer. However, has also been suggested to function as a homodimer or a homotetramer. Tightly associates with cardiolipin in the mitochondrion inner membrane; may stabilize and regulate its activity. In terms of processing, may undergo sulfenylation upon cold exposure. May increase the sensitivity of UCP1 thermogenic function to the activation by noradrenaline probably through structural effects. May undergo ubiquitin-mediated proteasomal degradation. In terms of tissue distribution, brown adipose tissue.

It localises to the mitochondrion inner membrane. It catalyses the reaction H(+)(in) = H(+)(out). With respect to regulation, has no constitutive proton transporter activity and has to be activated by long-chain fatty acids/LCFAs. Inhibited by purine nucleotides. Both purine nucleotides and LCFAs bind the cytosolic side of the transporter and directly compete to activate or inhibit it. Activated by noradrenaline and reactive oxygen species. Despite lacking canonical translational encoding for selenocysteine, a small pool of the protein has been observed to selectively incorporate selenocysteine at 'Cys-254'. Selenocysteine-modified protein is highly sensitive to redox modification and may constitute a pool of protein highly sensitive to activation by elevated levels of reactive oxygen species (ROS). In terms of biological role, mitochondrial protein responsible for thermogenic respiration, a specialized capacity of brown adipose tissue and beige fat that participates in non-shivering adaptive thermogenesis to temperature and diet variations and more generally to the regulation of energy balance. Functions as a long-chain fatty acid/LCFA and proton symporter, simultaneously transporting one LCFA and one proton through the inner mitochondrial membrane. However, LCFAs remaining associated with the transporter via their hydrophobic tails, it results in an apparent transport of protons activated by LCFAs. Thereby, dissipates the mitochondrial proton gradient and converts the energy of substrate oxydation into heat instead of ATP. Regulates the production of reactive oxygen species/ROS by mitochondria. The protein is Mitochondrial brown fat uncoupling protein 1 of Phodopus sungorus (Striped hairy-footed hamster).